Consider the following 151-residue polypeptide: Protein INO4 (151 aa).

The bHLH domain maps to glutamine 45–leucine 97. The tract at residues histidine 112–proline 137 is disordered. Residues threonine 116–asparagine 131 are compositionally biased toward polar residues.

In terms of assembly, efficient DNA binding requires dimerization with another bHLH protein.

Its subcellular location is the nucleus. Functionally, transcriptional activator of phospholipid synthetic genes (such as INO1, CHO1/PSS, CHO2/PEM1, OPI3/PEM2, etc.). This chain is Protein INO4 (INO4), found in Saccharomyces cerevisiae (strain ATCC 204508 / S288c) (Baker's yeast).